A 208-amino-acid polypeptide reads, in one-letter code: Holliday junction branch migration complex subunit RuvA (208 aa).

The tract at residues 1 to 63 (MIAFVSGPVA…EDSLTLYGFA (63 aa)) is domain I. The tract at residues 64 to 142 (NDDERQVFEL…EPVGAHIGQQ (79 aa)) is domain II. Residues 143–147 (GIGTP) form a flexible linker region. Residues 148–208 (VTSGWRDQLQ…AALQTLNRAR (61 aa)) form a domain III region.

Belongs to the RuvA family. Homotetramer. Forms an RuvA(8)-RuvB(12)-Holliday junction (HJ) complex. HJ DNA is sandwiched between 2 RuvA tetramers; dsDNA enters through RuvA and exits via RuvB. An RuvB hexamer assembles on each DNA strand where it exits the tetramer. Each RuvB hexamer is contacted by two RuvA subunits (via domain III) on 2 adjacent RuvB subunits; this complex drives branch migration. In the full resolvosome a probable DNA-RuvA(4)-RuvB(12)-RuvC(2) complex forms which resolves the HJ.

The protein resides in the cytoplasm. Functionally, the RuvA-RuvB-RuvC complex processes Holliday junction (HJ) DNA during genetic recombination and DNA repair, while the RuvA-RuvB complex plays an important role in the rescue of blocked DNA replication forks via replication fork reversal (RFR). RuvA specifically binds to HJ cruciform DNA, conferring on it an open structure. The RuvB hexamer acts as an ATP-dependent pump, pulling dsDNA into and through the RuvAB complex. HJ branch migration allows RuvC to scan DNA until it finds its consensus sequence, where it cleaves and resolves the cruciform DNA. The chain is Holliday junction branch migration complex subunit RuvA from Streptomyces griseus subsp. griseus (strain JCM 4626 / CBS 651.72 / NBRC 13350 / KCC S-0626 / ISP 5235).